A 514-amino-acid chain; its full sequence is Polygalacturonase (514 aa).

An N-terminal signal peptide occupies residues 1-22 (MGMKFMAAVAFLALQLIVMAAA). The propeptide occupies 23-50 (EDQSAQIMLDSDIEQYLRSNRSLKKLVH). PbH1 repeat units follow at residues 214 to 240 (CEGVKIQGLKIKAPRDSPNTDGIDIFA), 241 to 262 (SKRFHIEKCVIGTGDDCIAIGT), 264 to 284 (SSNITIKDLICGPGHGISIGS), 294 to 315 (VSHVHVNRAKFIDTQNGLRIKT), 323 to 344 (ASYITYENVEMINSENPILINQ), and 357 to 384 (RSAVQIQGVTYKNIHGTSATAAAIQLMC). The Proton donor role is filled by Asp-255. The N-linked (GlcNAc...) asparagine glycan is linked to Asn-266. Residue His-278 is part of the active site. The N-linked (GlcNAc...) asparagine glycan is linked to Asn-397.

This sequence belongs to the glycosyl hydrolase 28 family.

The protein localises to the secreted. It localises to the cell wall. The catalysed reaction is (1,4-alpha-D-galacturonosyl)n+m + H2O = (1,4-alpha-D-galacturonosyl)n + (1,4-alpha-D-galacturonosyl)m.. In Chamaecyparis obtusa (Hinoki false-cypress), this protein is Polygalacturonase.